We begin with the raw amino-acid sequence, 272 residues long: Shikimate dehydrogenase (NADP(+)) (272 aa).

Shikimate contacts are provided by residues S14–S16 and T61. The active-site Proton acceptor is K65. Position 77 (E77) interacts with NADP(+). Shikimate contacts are provided by N86 and D102. Residues G126–A130, N149–R154, and M213 contribute to the NADP(+) site. Y215 serves as a coordination point for shikimate. NADP(+) is bound at residue G237.

Belongs to the shikimate dehydrogenase family. As to quaternary structure, homodimer.

It catalyses the reaction shikimate + NADP(+) = 3-dehydroshikimate + NADPH + H(+). It functions in the pathway metabolic intermediate biosynthesis; chorismate biosynthesis; chorismate from D-erythrose 4-phosphate and phosphoenolpyruvate: step 4/7. Its function is as follows. Involved in the biosynthesis of the chorismate, which leads to the biosynthesis of aromatic amino acids. Catalyzes the reversible NADPH linked reduction of 3-dehydroshikimate (DHSA) to yield shikimate (SA). The sequence is that of Shikimate dehydrogenase (NADP(+)) from Escherichia coli O6:H1 (strain CFT073 / ATCC 700928 / UPEC).